Here is a 37-residue protein sequence, read N- to C-terminus: Large ribosomal subunit protein bL36c (37 aa).

Belongs to the bacterial ribosomal protein bL36 family.

Its subcellular location is the plastid. The protein resides in the chloroplast. In Pleurastrum terricola (Filamentous green alga), this protein is Large ribosomal subunit protein bL36c.